The sequence spans 136 residues: uncharacterized protein (136 aa).

It to E.coli YcgX and YdfO.

This is an uncharacterized protein from Escherichia coli (strain K12).